Consider the following 351-residue polypeptide: N-acetyl-gamma-glutamyl-phosphate reductase (351 aa).

Residue C154 is part of the active site.

This sequence belongs to the NAGSA dehydrogenase family. Type 1 subfamily.

The protein resides in the cytoplasm. The enzyme catalyses N-acetyl-L-glutamate 5-semialdehyde + phosphate + NADP(+) = N-acetyl-L-glutamyl 5-phosphate + NADPH + H(+). It participates in amino-acid biosynthesis; L-arginine biosynthesis; N(2)-acetyl-L-ornithine from L-glutamate: step 3/4. Its function is as follows. Catalyzes the NADPH-dependent reduction of N-acetyl-5-glutamyl phosphate to yield N-acetyl-L-glutamate 5-semialdehyde. The chain is N-acetyl-gamma-glutamyl-phosphate reductase from Prochlorococcus marinus (strain MIT 9215).